The sequence spans 170 residues: tRNA-splicing endonuclease (170 aa).

Active-site residues include Y110, H116, and K147.

Belongs to the tRNA-intron endonuclease family. Archaeal short subfamily. Homotetramer; although the tetramer contains four active sites, only two participate in the cleavage. Therefore, it should be considered as a dimer of dimers.

The enzyme catalyses pretRNA = a 3'-half-tRNA molecule with a 5'-OH end + a 5'-half-tRNA molecule with a 2',3'-cyclic phosphate end + an intron with a 2',3'-cyclic phosphate and a 5'-hydroxyl terminus.. Functionally, endonuclease that removes tRNA introns. Cleaves pre-tRNA at the 5'- and 3'-splice sites to release the intron. The products are an intron and two tRNA half-molecules bearing 2',3' cyclic phosphate and 5'-OH termini. Recognizes a pseudosymmetric substrate in which 2 bulged loops of 3 bases are separated by a stem of 4 bp. This is tRNA-splicing endonuclease from Pyrococcus furiosus (strain ATCC 43587 / DSM 3638 / JCM 8422 / Vc1).